A 58-amino-acid chain; its full sequence is Large ribosomal subunit protein uL30 (58 aa).

The protein belongs to the universal ribosomal protein uL30 family. Part of the 50S ribosomal subunit.

This is Large ribosomal subunit protein uL30 from Acinetobacter baumannii (strain AB307-0294).